Reading from the N-terminus, the 309-residue chain is Ribosomal RNA small subunit methyltransferase H (309 aa).

Residues 33 to 35 (GGH), D53, F79, D100, and Q107 each bind S-adenosyl-L-methionine.

It belongs to the methyltransferase superfamily. RsmH family.

The protein resides in the cytoplasm. It catalyses the reaction cytidine(1402) in 16S rRNA + S-adenosyl-L-methionine = N(4)-methylcytidine(1402) in 16S rRNA + S-adenosyl-L-homocysteine + H(+). Specifically methylates the N4 position of cytidine in position 1402 (C1402) of 16S rRNA. The sequence is that of Ribosomal RNA small subunit methyltransferase H from Clostridium botulinum (strain ATCC 19397 / Type A).